The sequence spans 317 residues: MMKANHSLTVEFILIGFSDHTDLKTLLFLLFSAIYLVTIVGNLGLVALIYMEPRLHTPMYIFLGNLALMDSCCSCAITPKMLENFFSVDRRISLYECMVQFYFLCLAETADCFLLAAMAYDRYVAICNPLQYHTMMSKKLSIQMSIGTFIASNLHSLIHTGCLLRLNFCKSRRIDHFFCDILPLYKLSCTDPFINELMLYIFSMPIQVFTITTVLVSYSCILLTVFKMKSKDGRGKAFSTCASHFFSVSIFYICLLMYIGPSKNSNKDIPVGVFYTIVIPLLNPFIYSLRNKEVVNAVKKVMKTHSIFKNSSASIAH.

At Met1–Phe28 the chain is on the extracellular side. A glycan (N-linked (GlcNAc...) asparagine) is linked at Asn5. The helical transmembrane segment at Leu29 to Ile49 threads the bilayer. Residues Tyr50–His56 are Cytoplasmic-facing. A helical membrane pass occupies residues Thr57–Ile77. Residues Thr78 to Ser93 lie on the Extracellular side of the membrane. A helical membrane pass occupies residues Leu94–Leu114. Cysteines 97 and 189 form a disulfide. At Leu115–Met144 the chain is on the cytoplasmic side. Residues Ser145–Arg165 traverse the membrane as a helical segment. The Extracellular segment spans residues Leu166–Met198. The chain crosses the membrane as a helical span at residues Leu199–Ser219. Residues Cys220–Ser239 are Cytoplasmic-facing. Residues Thr240–Ile259 traverse the membrane as a helical segment. Residues Gly260–Asp268 are Extracellular-facing. A helical transmembrane segment spans residues Ile269–Leu289. Residues Arg290 to His317 lie on the Cytoplasmic side of the membrane.

It belongs to the G-protein coupled receptor 1 family.

The protein localises to the cell membrane. Its function is as follows. Potential odorant receptor. The chain is Olfactory receptor 5K17 from Mus musculus (Mouse).